A 314-amino-acid polypeptide reads, in one-letter code: tRNA pseudouridine synthase B (314 aa).

His43 lines the substrate pocket. Asp48 functions as the Nucleophile in the catalytic mechanism. Residues Tyr76, Tyr179, and Leu200 each contribute to the substrate site.

Belongs to the pseudouridine synthase TruB family. Type 1 subfamily.

It carries out the reaction uridine(55) in tRNA = pseudouridine(55) in tRNA. Responsible for synthesis of pseudouridine from uracil-55 in the psi GC loop of transfer RNAs. The chain is tRNA pseudouridine synthase B from Shigella boydii serotype 4 (strain Sb227).